We begin with the raw amino-acid sequence, 195 residues long: 22.0 kDa heat shock protein (195 aa).

A signal peptide spans 1 to 21; that stretch reads MMKHLLSIFFIGALLLGNIKT. Residues 62–180 form the sHSP domain; that stretch reads RDTSVALSPA…GPRVVNIAAE (119 aa). Asparagine 160 is a glycosylation site (N-linked (GlcNAc...) asparagine).

It belongs to the small heat shock protein (HSP20) family. In terms of assembly, may form oligomeric structures.

It is found in the endoplasmic reticulum. This is 22.0 kDa heat shock protein (HSP22.0) from Arabidopsis thaliana (Mouse-ear cress).